We begin with the raw amino-acid sequence, 239 residues long: Small ribosomal subunit protein uS2 (239 aa).

The protein belongs to the universal ribosomal protein uS2 family.

The polypeptide is Small ribosomal subunit protein uS2 (Histophilus somni (strain 129Pt) (Haemophilus somnus)).